Consider the following 287-residue polypeptide: Glutamate racemase (287 aa).

A compositionally biased stretch (polar residues) spans 1-15 (MATKPQDANTTSREA). Residues 1–25 (MATKPQDANTTSREAITSKADSPPR) are disordered. Substrate contacts are provided by residues 32–33 (DS) and 64–65 (YG). Residue cysteine 96 is the Proton donor/acceptor of the active site. 97–98 (NT) contributes to the substrate binding site. The active-site Proton donor/acceptor is the cysteine 208. Residue 209 to 210 (TH) participates in substrate binding.

Belongs to the aspartate/glutamate racemases family.

The catalysed reaction is L-glutamate = D-glutamate. The protein operates within cell wall biogenesis; peptidoglycan biosynthesis. Functionally, provides the (R)-glutamate required for cell wall biosynthesis. This is Glutamate racemase from Yersinia pseudotuberculosis serotype O:1b (strain IP 31758).